A 331-amino-acid chain; its full sequence is MATFISELEAAKKSLSEALGENVKQYWANLKLWFKQKISKEEFDIEARRLLTQENVHSHNDFLLAILTRCQILISAPEGTGSLNSATKPGKPKGKKKISSVRQKFDHRFQAQNPLAGAQQFVSRDPQEDDELKLCSHTMSLPTRGQLEGRMIVTAFEHGLDNVTEEAVTIVTCALEKHLKDLLTSVVSRRKAYRLKDGHFRYAFGCNVNPQPYLRNSVAAYNQLIECPPVFSSPTGAPNSGSYIHPDDAEQQAALLLACSGDNLTASLPPVNMYDLLEGLQVHREAIPSHTVYALNMERILMKLWHPNTEELQQDEIHRQRLAAKDGLLLC.

It belongs to the TADA1 family.

Its subcellular location is the nucleus. Probably involved in transcriptional regulation. The chain is Transcriptional adapter 1 (tada1) from Xenopus tropicalis (Western clawed frog).